The primary structure comprises 115 residues: Ribonuclease P protein component (115 aa).

The protein belongs to the RnpA family. Consists of a catalytic RNA component (M1 or rnpB) and a protein subunit.

The enzyme catalyses Endonucleolytic cleavage of RNA, removing 5'-extranucleotides from tRNA precursor.. Its function is as follows. RNaseP catalyzes the removal of the 5'-leader sequence from pre-tRNA to produce the mature 5'-terminus. It can also cleave other RNA substrates such as 4.5S RNA. The protein component plays an auxiliary but essential role in vivo by binding to the 5'-leader sequence and broadening the substrate specificity of the ribozyme. The sequence is that of Ribonuclease P protein component from Bacillus cereus (strain G9842).